We begin with the raw amino-acid sequence, 143 residues long: Sarcoplasmic/endoplasmic reticulum calcium ATPase (143 aa).

The protein belongs to the cation transport ATPase (P-type) (TC 3.A.3) family. Type IIA subfamily.

Its subcellular location is the endoplasmic reticulum membrane. The protein resides in the sarcoplasmic reticulum membrane. It carries out the reaction Ca(2+)(in) + ATP + H2O = Ca(2+)(out) + ADP + phosphate + H(+). Its function is as follows. This magnesium-dependent enzyme catalyzes the hydrolysis of ATP coupled with the transport of calcium. Transports calcium ions from the cytosol into the sarcoplasmic/endoplasmic reticulum lumen. Contributes to calcium sequestration involved in muscular excitation/contraction. The sequence is that of Sarcoplasmic/endoplasmic reticulum calcium ATPase from Chionoecetes opilio (Atlantic snow crab).